The primary structure comprises 61 residues: MKGTPSFGKMNKTPTHVRCRRCGRNSFNARKGYCAACGFGRSKKIRRYSWQNKKVNGVRLV.

Positions 19, 22, 34, and 37 each coordinate Zn(2+). The segment at 19–37 (CRRCGRNSFNARKGYCAAC) adopts a C4-type zinc-finger fold.

This sequence belongs to the eukaryotic ribosomal protein eL37 family. Zn(2+) serves as cofactor.

In terms of biological role, binds to the 23S rRNA. This chain is Large ribosomal subunit protein eL37, found in Sulfolobus acidocaldarius (strain ATCC 33909 / DSM 639 / JCM 8929 / NBRC 15157 / NCIMB 11770).